A 1639-amino-acid polypeptide reads, in one-letter code: Mediator of RNA polymerase II transcription subunit 14 (1639 aa).

Residues 49-53 (LAELL) carry the LXXLL motif 1 motif. 2 disordered regions span residues 561–586 (GQSP…GSDS) and 709–755 (LPQP…KTVH). Over residues 575–586 (SAAGGPAPGSDS) the composition is skewed to low complexity. Positions 711-721 (QPKPPQAPPTP) are enriched in pro residues. The span at 722–748 (QQQQQQQQQQQQPGTSDAKSSGAGASA) shows a compositional bias: low complexity. The LXXLL motif 2 signature appears at 768–772 (LKRLL). Disordered regions lie at residues 1039 to 1243 (RRSQ…HHYT) and 1558 to 1639 (MQPG…GGPN). 2 stretches are compositionally biased toward gly residues: residues 1062–1088 (GNNG…GTGM) and 1122–1142 (IGGG…GQGG). The span at 1189-1201 (GPSSLSYMQSHTD) shows a compositional bias: polar residues. A compositionally biased stretch (pro residues) spans 1219-1229 (PGMPRPSPRPG). Positions 1558–1579 (MQPGGGPGVPGGPGGPMGGQIG) are enriched in gly residues. Over residues 1589 to 1603 (VGSSPSPMMHSPMQQ) the composition is skewed to low complexity. Residues 1604–1639 (MGGGGPQPGAYGGMVGGPGGGPQSGGPVGGGPGGPN) show a composition bias toward gly residues.

This sequence belongs to the Mediator complex subunit 14 family. As to quaternary structure, component of the Mediator complex.

The protein localises to the nucleus. In terms of biological role, component of the Mediator complex, a coactivator involved in the regulated transcription of nearly all RNA polymerase II-dependent genes. Mediator functions as a bridge to convey information from gene-specific regulatory proteins to the basal RNA polymerase II transcription machinery. Mediator is recruited to promoters by direct interactions with regulatory proteins and serves as a scaffold for the assembly of a functional preinitiation complex with RNA polymerase II and the general transcription factors. This Anopheles gambiae (African malaria mosquito) protein is Mediator of RNA polymerase II transcription subunit 14 (MED14).